The primary structure comprises 158 residues: 2-C-methyl-D-erythritol 2,4-cyclodiphosphate synthase (158 aa).

Positions 8 and 10 each coordinate a divalent metal cation. 4-CDP-2-C-methyl-D-erythritol 2-phosphate contacts are provided by residues 8 to 10 and 34 to 35; these read DSH and HS. His42 provides a ligand contact to a divalent metal cation. Residues 56–58, 61–65, and Arg142 each bind 4-CDP-2-C-methyl-D-erythritol 2-phosphate; these read DIG and FPDND.

It belongs to the IspF family. As to quaternary structure, homotrimer. Requires a divalent metal cation as cofactor.

It carries out the reaction 4-CDP-2-C-methyl-D-erythritol 2-phosphate = 2-C-methyl-D-erythritol 2,4-cyclic diphosphate + CMP. The protein operates within isoprenoid biosynthesis; isopentenyl diphosphate biosynthesis via DXP pathway; isopentenyl diphosphate from 1-deoxy-D-xylulose 5-phosphate: step 4/6. In terms of biological role, involved in the biosynthesis of isopentenyl diphosphate (IPP) and dimethylallyl diphosphate (DMAPP), two major building blocks of isoprenoid compounds. Catalyzes the conversion of 4-diphosphocytidyl-2-C-methyl-D-erythritol 2-phosphate (CDP-ME2P) to 2-C-methyl-D-erythritol 2,4-cyclodiphosphate (ME-CPP) with a corresponding release of cytidine 5-monophosphate (CMP). The sequence is that of 2-C-methyl-D-erythritol 2,4-cyclodiphosphate synthase from Brachyspira hyodysenteriae (strain ATCC 49526 / WA1).